The following is a 533-amino-acid chain: Glucose-6-phosphate exchanger SLC37A1 (533 aa).

Residues 18–38 traverse the membrane as a helical segment; the sequence is QWYRAFIFILTFLLYASFHLS. N-linked (GlcNAc...) asparagine glycosylation is present at Asn-81. A run of 4 helical transmembrane segments spans residues 100 to 120, 129 to 149, 157 to 177, and 222 to 242; these read GALDYSFLCAYAVGMYLSGII, YLTFGMLASGAFTALFGLGYF, FYVVTQVINGLVQTTGWPSVV, and SFVVPGAIVAAMGIVCFLFLI. N-linked (GlcNAc...) asparagine glycosylation occurs at Asn-263. 7 helical membrane passes run 304–324, 334–354, 366–386, 394–414, 423–443, 466–486, and 490–510; these read VVILPGDGGSGTAAISFTGAL, LCLLFAKLVSYTFLFWLPLYI, GELSTLFDVGGIFGGILAGVI, ASTCGLMLLLAAPTLYIFSTV, IAMLLLSGALVSGPYTLITTA, AIIDGTGSVGAALGPLLAGLL, and GWSNVFYMLMFADACALLFLI.

The protein belongs to the major facilitator superfamily. Organophosphate:Pi antiporter (OPA) (TC 2.A.1.4) family. In terms of tissue distribution, expressed in numerous tissues, with highest expression in pancreas, kidney, bone marrow, spleen, liver, small intestine, as well as in fetal brain, liver and spleen.

It localises to the endoplasmic reticulum membrane. It carries out the reaction D-glucose 6-phosphate(in) + phosphate(out) = D-glucose 6-phosphate(out) + phosphate(in). With respect to regulation, inhibited by vanadate but not by chlorogenic acid. Functionally, inorganic phosphate and glucose-6-phosphate antiporter. May transport cytoplasmic glucose-6-phosphate into the lumen of the endoplasmic reticulum and translocate inorganic phosphate into the opposite direction. Independent of a lumenal glucose-6-phosphatase. May not play a role in homeostatic regulation of blood glucose levels. The protein is Glucose-6-phosphate exchanger SLC37A1 of Homo sapiens (Human).